The sequence spans 118 residues: UPF0342 protein ABC1519 (118 aa).

This sequence belongs to the UPF0342 family.

The chain is UPF0342 protein ABC1519 from Shouchella clausii (strain KSM-K16) (Alkalihalobacillus clausii).